A 336-amino-acid polypeptide reads, in one-letter code: Ferrochelatase (336 aa).

Fe cation contacts are provided by His206 and Glu287.

Belongs to the ferrochelatase family.

It is found in the cytoplasm. It catalyses the reaction heme b + 2 H(+) = protoporphyrin IX + Fe(2+). It participates in porphyrin-containing compound metabolism; protoheme biosynthesis; protoheme from protoporphyrin-IX: step 1/1. Its function is as follows. Catalyzes the ferrous insertion into protoporphyrin IX. The protein is Ferrochelatase of Neisseria meningitidis serogroup B (strain ATCC BAA-335 / MC58).